A 410-amino-acid chain; its full sequence is Chitinase-3-like protein 1 (410 aa).

The N-terminal stretch at 1–48 (MGVKAAQTGIWASQGQSIRVVGFQAQTAHRAICLLGFVVLVLLQCCSA) is a signal peptide. The region spanning 49–410 (YKLVCYYTSW…NAIKDALAAT (362 aa)) is the GH18 domain. The cysteines at positions 53 and 78 are disulfide-linked. The N-linked (GlcNAc...) asparagine glycan is linked to Asn-87. Residues 97-98 (EW), 124-127 (GGWN), Tyr-168, 231-234 (MTYD), and Arg-290 contribute to the chitin site. A disulfide bridge connects residues Cys-327 and Cys-391. Positions 351–365 (QWVGYDDQESVKSKV) are important for AKT1 activation and IL8 production. Residue Trp-379 participates in chitin binding.

Belongs to the glycosyl hydrolase 18 family. In terms of assembly, monomer.

It is found in the secreted. It localises to the extracellular space. The protein resides in the cytoplasm. The protein localises to the perinuclear region. Its subcellular location is the endoplasmic reticulum. Its function is as follows. Carbohydrate-binding lectin with a preference for chitin. Has no chitinase activity. May play a role in tissue remodeling and in the capacity of cells to respond to and cope with changes in their environment. Plays a role in T-helper cell type 2 (Th2) inflammatory response and IL-13-induced inflammation, regulating allergen sensitization, inflammatory cell apoptosis, dendritic cell accumulation and M2 macrophage differentiation. Facilitates invasion of pathogenic enteric bacteria into colonic mucosa and lymphoid organs. Mediates activation of AKT1 signaling pathway and subsequent IL8 production in colonic epithelial cells. Regulates antibacterial responses in lung by contributing to macrophage bacterial killing, controlling bacterial dissemination and augmenting host tolerance. Also regulates hyperoxia-induced injury, inflammation and epithelial apoptosis in lung. This Pongo abelii (Sumatran orangutan) protein is Chitinase-3-like protein 1 (CHI3L1).